The chain runs to 152 residues: FMN reductase (NADH) RutF (152 aa).

This sequence belongs to the non-flavoprotein flavin reductase family. RutF subfamily.

It carries out the reaction FMNH2 + NAD(+) = FMN + NADH + 2 H(+). Functionally, catalyzes the reduction of FMN to FMNH2 which is used to reduce pyrimidine by RutA via the Rut pathway. The protein is FMN reductase (NADH) RutF of Shigella dysenteriae serotype 1 (strain Sd197).